The chain runs to 364 residues: Anionic peroxidase (364 aa).

The first 20 residues, 1-20, serve as a signal peptide directing secretion; the sequence is MASFMKQLSLVLSFIALALA. The propeptide occupies 21-66; the sequence is GCAVYQNTQTAMKDQLKVTPTWLDNTLKSTNLLSLGLGKPSGGKLG. His99 serves as the catalytic Proton acceptor. Ca(2+)-binding residues include Asp100, Val103, Gly105, and Asp107. A disulfide bond links Cys101 and Cys106. Residues Asn113, Asn188, Asn202, and Asn216 are each glycosylated (N-linked (GlcNAc...) asparagine). Cystine bridges form between Cys155–Cys343 and Cys234–Cys255. Position 227 (His227) interacts with heme b. A Ca(2+)-binding site is contributed by Thr228. Asn254 and Asn260 each carry an N-linked (GlcNAc...) asparagine glycan. Asp268, Thr270, and Asp275 together coordinate Ca(2+). A glycan (N-linked (GlcNAc...) asparagine) is linked at Asn299.

The protein belongs to the peroxidase family. Classical plant (class III) peroxidase subfamily. It depends on Ca(2+) as a cofactor. The cofactor is heme b. Highly expressed in suspension cultured cells and calli. Weak expression also found in the stems of intact plants. No expression in leaf, tuberous root and non-tuberous root.

The protein localises to the secreted. It catalyses the reaction 2 a phenolic donor + H2O2 = 2 a phenolic radical donor + 2 H2O. Removal of H(2)O(2), oxidation of toxic reductants, biosynthesis and degradation of lignin, suberization, auxin catabolism, response to environmental stresses such as wounding, pathogen attack and oxidative stress. These functions might be dependent on each isozyme/isoform in each plant tissue. In terms of biological role, may contribute to protection against cold-induced oxidative stress. The polypeptide is Anionic peroxidase (Ipomoea batatas (Sweet potato)).